The primary structure comprises 153 residues: Probable ubiquitin-conjugating enzyme E2 C (153 aa).

The region spanning 6 to 153 (SVSKRLQSEL…KRYQEATSRP (148 aa)) is the UBC core domain. The Glycyl thioester intermediate role is filled by cysteine 90.

The protein belongs to the ubiquitin-conjugating enzyme family. Component of the APC/C complex. In terms of processing, autoubiquitinated by the APC/C complex, leading to its degradation by the proteasome.

It carries out the reaction S-ubiquitinyl-[E1 ubiquitin-activating enzyme]-L-cysteine + [E2 ubiquitin-conjugating enzyme]-L-cysteine = [E1 ubiquitin-activating enzyme]-L-cysteine + S-ubiquitinyl-[E2 ubiquitin-conjugating enzyme]-L-cysteine.. It participates in protein modification; protein ubiquitination. Functionally, catalyzes the covalent attachment of ubiquitin to other proteins. Acts as an essential factor of the anaphase promoting complex/cyclosome (APC/C), a cell cycle-regulated ubiquitin ligase that controls progression through mitosis. Acts by initiating polyubiquitin chains on APC/C substrates, leading to the degradation of APC/C substrates by the proteasome and promoting mitotic exit. This chain is Probable ubiquitin-conjugating enzyme E2 C (ube2c), found in Dictyostelium discoideum (Social amoeba).